The sequence spans 453 residues: MVEDTASVAALYRSYLTPLGIDINIVGTGRDAIESLNHRIPDLILLDLRLPDMTGMDVLHAVKKSHPDVPIIFMTAHGSIDTAVEAMRHGSQDFLIKPCEADRLRVTVNNAIRKATKLKNEADNPGNQNYQGFIGSSQTMQQVYRTIDSAASSKASIFITGESGTGKEVCAEAIHAASKRGDKPFIAINCAAIPKDLIESELFGHVKGAFTGAANDRQGAAELADGGTLFLDELCEMDLDLQTKLLRFIQTGTFQKVGSSKMKSVDVRFVCATNRDPWKEVQEGRFREDLYYRLYVIPLHLPPLRERGEDVIEIAYSLLGYMSHEEGKNFVRFSQEVIDRFNSYEWPGNVRQLQNVLRNIVVLNNGKEITLDMLPPPLNQPLDRPSVSKLIEPKAMTVSEIMPLWMTEKMAIEQAIEACDGNIPRAAGYLDVSPSTIYRKLQAWNGKEERQKV.

Residues methionine 1–isoleucine 112 form the Response regulatory domain. Aspartate 47 bears the 4-aspartylphosphate mark. In terms of domain architecture, Sigma-54 factor interaction spans phenylalanine 133–valine 362. Residues glycine 161–glutamate 168 and alanine 224–glutamate 233 each bind ATP.

In terms of biological role, involved in the regulation of different processes depending on the cell density. Acts together with sigma-54 to repress, perhaps indirectly, some genes. In Vibrio parahaemolyticus serotype O3:K6 (strain RIMD 2210633), this protein is Regulatory protein LuxO (luxO).